The chain runs to 662 residues: UvrABC system protein B (662 aa).

Positions 31-188 (DNIEGGEKAQ…NDLVDIQFER (158 aa)) constitute a Helicase ATP-binding domain. 44–51 (GATGTGKT) serves as a coordination point for ATP. The Beta-hairpin motif lies at 97–120 (YYDYYQPEAYVPSSDTYIEKDSSV). One can recognise a Helicase C-terminal domain in the interval 435–601 (QIDDLLGEIN…TIKKEIRDLI (167 aa)). The 36-residue stretch at 626-661 (KELVKKLEKQMQEAVEVLDFELAAQIRDMMLEVKAL) folds into the UVR domain.

The protein belongs to the UvrB family. In terms of assembly, forms a heterotetramer with UvrA during the search for lesions. Interacts with UvrC in an incision complex.

The protein localises to the cytoplasm. The UvrABC repair system catalyzes the recognition and processing of DNA lesions. A damage recognition complex composed of 2 UvrA and 2 UvrB subunits scans DNA for abnormalities. Upon binding of the UvrA(2)B(2) complex to a putative damaged site, the DNA wraps around one UvrB monomer. DNA wrap is dependent on ATP binding by UvrB and probably causes local melting of the DNA helix, facilitating insertion of UvrB beta-hairpin between the DNA strands. Then UvrB probes one DNA strand for the presence of a lesion. If a lesion is found the UvrA subunits dissociate and the UvrB-DNA preincision complex is formed. This complex is subsequently bound by UvrC and the second UvrB is released. If no lesion is found, the DNA wraps around the other UvrB subunit that will check the other stand for damage. The polypeptide is UvrABC system protein B (Streptococcus pneumoniae (strain P1031)).